Reading from the N-terminus, the 346-residue chain is Olfactory receptor 13D1 (346 aa).

The Extracellular portion of the chain corresponds to 1 to 57; sequence MYRFTDFDVSNISIYLNHVLFYTTQQAGDLEHMETRNYSAMTEFFLVGLSQYPELQL. Asparagine 37 is a glycosylation site (N-linked (GlcNAc...) asparagine). The helical transmembrane segment at 58-78 threads the bilayer; it reads FLFLLCLIMYMIILLGNSLLI. The Cytoplasmic segment spans residues 79 to 86; sequence IITILDSR. Residues 87 to 107 traverse the membrane as a helical segment; the sequence is LHTPMYFFLGNLSFLDICYTS. Residues 108-131 are Extracellular-facing; it reads SSIPPMLIIFMSERKSISFIGCAL. The cysteines at positions 129 and 221 are disulfide-linked. A helical membrane pass occupies residues 132-152; sequence QMVVSLGLGSTECVLLAVMAY. Residues 153–171 are Cytoplasmic-facing; that stretch reads DHYVAICNPLRYSIIMNGV. Residues 172-192 traverse the membrane as a helical segment; it reads LYVQMAAWSWIIGCLTSLLQT. The Extracellular segment spans residues 193-229; that stretch reads VLTMMLPFCGNNVIDHITCEILALLKLVCSDITINVL. A helical membrane pass occupies residues 230–249; it reads IMTVTNIVSLVILLLLIFIS. Residues 250–269 are Cytoplasmic-facing; sequence YVFILSSILRINCAEGRKKA. The helical transmembrane segment at 270-290 threads the bilayer; that stretch reads FSTCSAHSIVVILFYGSALFM. Residues 291-303 lie on the Extracellular side of the membrane; it reads YMKPKSKNTNTSD. N-linked (GlcNAc...) asparagine glycosylation is present at asparagine 300. A helical transmembrane segment spans residues 304–324; that stretch reads EIIGLSYGVVSPMLNPIIYSL. The Cytoplasmic segment spans residues 325–346; sequence RNKEVKEAVKKVLSRHLHLLKM.

The protein belongs to the G-protein coupled receptor 1 family.

It localises to the cell membrane. Its function is as follows. Odorant receptor. The polypeptide is Olfactory receptor 13D1 (OR13D1) (Homo sapiens (Human)).